Reading from the N-terminus, the 505-residue chain is Glutamate--tRNA ligase (505 aa).

Residues P16–T26 carry the 'HIGH' region motif. The short motif at K257–R261 is the 'KMSKS' region element. ATP is bound at residue K260.

It belongs to the class-I aminoacyl-tRNA synthetase family. Glutamate--tRNA ligase type 1 subfamily. In terms of assembly, monomer.

The protein localises to the cytoplasm. The enzyme catalyses tRNA(Glu) + L-glutamate + ATP = L-glutamyl-tRNA(Glu) + AMP + diphosphate. In terms of biological role, catalyzes the attachment of glutamate to tRNA(Glu) in a two-step reaction: glutamate is first activated by ATP to form Glu-AMP and then transferred to the acceptor end of tRNA(Glu). The sequence is that of Glutamate--tRNA ligase from Psychrobacter sp. (strain PRwf-1).